Consider the following 432-residue polypeptide: Glutamyl-tRNA reductase (432 aa).

Residues 55–58 (TCNR), Ser114, 119–121 (ETQ), and Gln125 contribute to the substrate site. Cys56 serves as the catalytic Nucleophile. 194-199 (GAGEMI) provides a ligand contact to NADP(+).

This sequence belongs to the glutamyl-tRNA reductase family. As to quaternary structure, homodimer.

The enzyme catalyses (S)-4-amino-5-oxopentanoate + tRNA(Glu) + NADP(+) = L-glutamyl-tRNA(Glu) + NADPH + H(+). Its pathway is porphyrin-containing compound metabolism; protoporphyrin-IX biosynthesis; 5-aminolevulinate from L-glutamyl-tRNA(Glu): step 1/2. Its function is as follows. Catalyzes the NADPH-dependent reduction of glutamyl-tRNA(Glu) to glutamate 1-semialdehyde (GSA). The sequence is that of Glutamyl-tRNA reductase from Burkholderia orbicola (strain AU 1054).